The chain runs to 142 residues: Large ribosomal subunit protein uL16 (142 aa).

This sequence belongs to the universal ribosomal protein uL16 family. Part of the 50S ribosomal subunit.

In terms of biological role, binds 23S rRNA and is also seen to make contacts with the A and possibly P site tRNAs. This chain is Large ribosomal subunit protein uL16, found in Fervidobacterium nodosum (strain ATCC 35602 / DSM 5306 / Rt17-B1).